A 1109-amino-acid chain; its full sequence is Receptor-like protein kinase (1109 aa).

A signal peptide spans 1–20; that stretch reads MKVAVNTFLLFLCSTSSIYA. The Extracellular segment spans residues 21-764; that stretch reads AFALNSDGAA…GGLSTLGIAM (744 aa). Asn-50, Asn-74, and Asn-114 each carry an N-linked (GlcNAc...) asparagine glycan. 6 LRR repeats span residues 69–92, 93–115, 117–140, 141–162, 165–187, and 189–209; these read FVDTLNLSSYGISGEFGPEISHLK, HLKKVVLSGNGFFGSIPSQLGNC, LLEHIDLSSNSFTGNIPDTLGALQ, NLRNLSLFFNSLIGPFPESLLS, HLETVYFTGNGLNGSIPSNIGNM, and ELTTLWLDDNQFSGPVPSSLG. Asn-144, Asn-177, and Asn-186 each carry an N-linked (GlcNAc...) asparagine glycan. Asn-210 carries an N-linked (GlcNAc...) asparagine glycan. LRR repeat units follow at residues 213-236, 237-258, 261-284, 309-331, 333-355, 357-378, 381-404, 405-427, 429-451, 453-476, 477-499, 500-523, 524-546, 548-569, 572-595, 596-618, 620-642, 643-666, 667-689, and 690-710; these read TLQELYLNDNNLVGTLPVTLNNLE, NLVYLDVRNNSLVGAIPLDFVS, QIDTISLSNNQFTGGLPPGLGNCT, KLDTLYLAGNHFSGRIPPELGKC, SMIDLQLQQNQLEGEIPGELGML, QLQYLHLYTNNLSGEVPLSIWK, SLQSLQLYQNNLSGELPVDMTELK, QLVSLALYENHFTGVIPQDLGAN, SLEVLDLTRNMFTGHIPPNLCSQ, KLKRLLLGYNYLEGSVPSDLGGCS, TLERLILEENNLRGGLPDFVEKQ, NLLFFDLSGNNFTGPIPPSLGNLK, NVTAIYLSSNQLSGSIPPELGSL, KLEHLNLSHNILKGILPSELSN, KLSELDASHNLLNGSIPSTLGSLT, ELTKLSLGENSFSGGIPTSLFQS, KLLNLQLGGNLLAGDIPPVGALQ, ALRSLNLSSNKLNGQLPIDLGKLK, MLEELDVSHNNLSGTLRVLSTIQ, and SLTFINISHNLFSGPVPPSLT. Asn-245 and Asn-282 each carry an N-linked (GlcNAc...) asparagine glycan. 3 N-linked (GlcNAc...) asparagine glycosylation sites follow: Asn-367, Asn-391, and Asn-427. 4 N-linked (GlcNAc...) asparagine glycosylation sites follow: Asn-510, Asn-524, Asn-553, and Asn-584. N-linked (GlcNAc...) asparagine glycans are attached at residues Asn-648, Asn-677, and Asn-695. A helical membrane pass occupies residues 765-785; it reads IVLGALLFIICLFLFSAFLFL. The Cytoplasmic segment spans residues 786 to 1109; sequence HCKKSVQEIA…YSSSVRNKSK (324 aa). The region spanning 816 to 1096 is the Protein kinase domain; the sequence is LNDKYVIGKG…DVVKQLTRWS (281 aa). ATP-binding positions include 822–830 and Lys-845; that span reads IGKGAHGTI. The stretch at 827-850 is one LRR 27 repeat; it reads HGTIYKATLSPDKVYAVKKLVFTG. Asp-942 serves as the catalytic Proton acceptor. Residues 958–981 form an LRR 28 repeat; it reads ISDFGIAKLLDQSATSIPSNTVQG.

Belongs to the protein kinase superfamily. Ser/Thr protein kinase family. As to expression, INRPK1 and INRPK1b are expressed in leaves, cotyledons, shoot tips and roots from induced and vegetative plants. The highest concentrations of INRPK1 are found in vegetative roots, and the lowest concentrations in vegetative cotyledons. INRPK1b is more abundant in roots than other tissues. INRPK1a is expressed in vegetative roots. INRPK1c is expressed in cotyledons.

It is found in the cell membrane. Its subcellular location is the secreted. It catalyses the reaction L-seryl-[protein] + ATP = O-phospho-L-seryl-[protein] + ADP + H(+). It carries out the reaction L-threonyl-[protein] + ATP = O-phospho-L-threonyl-[protein] + ADP + H(+). Its function is as follows. Possible role in short-day photoperiod floral induction. The sequence is that of Receptor-like protein kinase (INRPK1) from Ipomoea nil (Japanese morning glory).